A 698-amino-acid chain; its full sequence is Elongation factor G (698 aa).

In terms of domain architecture, tr-type G spans 10 to 285; the sequence is DKTRNIGIMA…GVVDYLPSPL (276 aa). GTP contacts are provided by residues 19–26, 83–87, and 137–140; these read AHIDAGKT, DTPGH, and NKMD.

This sequence belongs to the TRAFAC class translation factor GTPase superfamily. Classic translation factor GTPase family. EF-G/EF-2 subfamily.

It is found in the cytoplasm. In terms of biological role, catalyzes the GTP-dependent ribosomal translocation step during translation elongation. During this step, the ribosome changes from the pre-translocational (PRE) to the post-translocational (POST) state as the newly formed A-site-bound peptidyl-tRNA and P-site-bound deacylated tRNA move to the P and E sites, respectively. Catalyzes the coordinated movement of the two tRNA molecules, the mRNA and conformational changes in the ribosome. The protein is Elongation factor G of Lactobacillus johnsonii (strain CNCM I-12250 / La1 / NCC 533).